Reading from the N-terminus, the 420-residue chain is Glucose-1-phosphate adenylyltransferase (420 aa).

Alpha-D-glucose 1-phosphate contacts are provided by residues tyrosine 107, glycine 172, 187–188 (EK), and serine 205.

This sequence belongs to the bacterial/plant glucose-1-phosphate adenylyltransferase family. In terms of assembly, homotetramer.

The catalysed reaction is alpha-D-glucose 1-phosphate + ATP + H(+) = ADP-alpha-D-glucose + diphosphate. It participates in glycan biosynthesis; glycogen biosynthesis. In terms of biological role, involved in the biosynthesis of ADP-glucose, a building block required for the elongation reactions to produce glycogen. Catalyzes the reaction between ATP and alpha-D-glucose 1-phosphate (G1P) to produce pyrophosphate and ADP-Glc. The sequence is that of Glucose-1-phosphate adenylyltransferase from Rhodopseudomonas palustris (strain HaA2).